We begin with the raw amino-acid sequence, 289 residues long: 33 kDa chaperonin (289 aa).

Disulfide bonds link Cys-235–Cys-237 and Cys-268–Cys-271.

It belongs to the HSP33 family. In terms of processing, under oxidizing conditions two disulfide bonds are formed involving the reactive cysteines. Under reducing conditions zinc is bound to the reactive cysteines and the protein is inactive.

Its subcellular location is the cytoplasm. Redox regulated molecular chaperone. Protects both thermally unfolding and oxidatively damaged proteins from irreversible aggregation. Plays an important role in the bacterial defense system toward oxidative stress. This is 33 kDa chaperonin from Bacillus licheniformis (strain ATCC 14580 / DSM 13 / JCM 2505 / CCUG 7422 / NBRC 12200 / NCIMB 9375 / NCTC 10341 / NRRL NRS-1264 / Gibson 46).